A 161-amino-acid chain; its full sequence is Cyclin-dependent protein kinase inhibitor SMR12 (161 aa).

Residues 84 to 93 show a composition bias toward acidic residues; it reads EEEEVVEEEN. The disordered stretch occupies residues 84 to 106; sequence EEEEVVEEENDGFKTPTRPENRI.

Its function is as follows. Probable cyclin-dependent protein kinase (CDK) inhibitor that functions as a repressor of mitosis in the endoreduplication cell cycle. The chain is Cyclin-dependent protein kinase inhibitor SMR12 from Arabidopsis thaliana (Mouse-ear cress).